A 205-amino-acid chain; its full sequence is Thymidylate kinase (205 aa).

Residue 9-16 (GPEGSGKT) coordinates ATP.

Belongs to the thymidylate kinase family.

The enzyme catalyses dTMP + ATP = dTDP + ADP. Its function is as follows. Phosphorylation of dTMP to form dTDP in both de novo and salvage pathways of dTTP synthesis. This is Thymidylate kinase from Staphylococcus aureus (strain NCTC 8325 / PS 47).